The sequence spans 714 residues: Solute carrier family 12 member 8 (714 aa).

6 helical membrane passes run Val-37–Leu-60, Leu-72–Ile-93, Ser-99–Gly-116, Gly-123–Ala-142, Ile-154–Leu-173, and Leu-185–Leu-205. Asn-221 carries N-linked (GlcNAc...) asparagine glycosylation. 5 helical membrane-spanning segments follow: residues Phe-233–Gly-254, Leu-266–Ile-289, Gly-309–Ala-331, Pro-360–Val-377, and Leu-383–Phe-403. Disordered stretches follow at residues Lys-471–Asp-503 and Gly-530–Thr-550. Residues Ser-533–Glu-548 are compositionally biased toward polar residues. A run of 2 helical transmembrane segments spans residues Cys-593 to Tyr-616 and Gly-622 to Ala-643.

This sequence belongs to the SLC12A transporter family. Ubiquitous with very low level in normal skin.

The protein localises to the membrane. In terms of biological role, cation/chloride cotransporter that may play a role in the control of keratinocyte proliferation. In Homo sapiens (Human), this protein is Solute carrier family 12 member 8 (SLC12A8).